Consider the following 183-residue polypeptide: MDIDPYKEFGASVELLSFLPSDFFPSIRDLLDTASALYREALESPEHCSPHHTALRQAILCWGELMNLATWVGSNLEDPASRELVVSYVNVNMGLKIRQLLWFHVSCLTFGRETVLEYLVSFGVWIRTPPAYRPPNAPILSTLPETTVVRRRGRSPRRRTPSPRRRRSQSPRRRRSQSRESQC.

Residues 136–183 (NAPILSTLPETTVVRRRGRSPRRRTPSPRRRRSQSPRRRRSQSRESQC) are disordered. The span at 149-176 (VRRRGRSPRRRTPSPRRRRSQSPRRRRS) shows a compositional bias: basic residues. Phosphoserine; by host is present on residues S155, S162, and S170. The 1; half-length repeat unit spans residues 155–161 (SPRRRTP). Positions 155–177 (SPRRRTPSPRRRRSQSPRRRRSQ) are 3 X 8 AA repeats of S-P-R-R-R-[PR]-S-Q. Positions 158–175 (RRTPSPRRRRSQSPRRRR) match the Bipartite nuclear localization signal motif. A run of 2 repeats spans residues 162–169 (SPRRRRSQ) and 170–177 (SPRRRRSQ). Positions 177–183 (QSRESQC) are RNA binding.

It belongs to the orthohepadnavirus core antigen family. Homodimerizes, then multimerizes. Interacts with cytosol exposed regions of viral L glycoprotein present in the reticulum-to-Golgi compartment. Interacts with human FLNB. Phosphorylated form interacts with host importin alpha; this interaction depends on the exposure of the NLS, which itself depends upon genome maturation and/or phosphorylation of the capsid protein. Interacts with host NUP153. Post-translationally, phosphorylated by host SRPK1, SRPK2, and maybe protein kinase C or GAPDH. Phosphorylation is critical for pregenomic RNA packaging. Protein kinase C phosphorylation is stimulated by HBx protein and may play a role in transport of the viral genome to the nucleus at the late step during the viral replication cycle.

It is found in the virion. The protein resides in the host cytoplasm. Functionally, self assembles to form an icosahedral capsid. Most capsids appear to be large particles with an icosahedral symmetry of T=4 and consist of 240 copies of capsid protein, though a fraction forms smaller T=3 particles consisting of 180 capsid proteins. Entering capsids are transported along microtubules to the nucleus. Phosphorylation of the capsid is thought to induce exposure of nuclear localization signal in the C-terminal portion of the capsid protein that allows binding to the nuclear pore complex via the importin (karyopherin-) alpha and beta. Capsids are imported in intact form through the nuclear pore into the nuclear basket, where it probably binds NUP153. Only capsids that contain the mature viral genome can release the viral DNA and capsid protein into the nucleoplasm. Immature capsids get stuck in the basket. Capsids encapsulate the pre-genomic RNA and the P protein. Pre-genomic RNA is reverse-transcribed into DNA while the capsid is still in the cytoplasm. The capsid can then either be directed to the nucleus, providing more genomes for transcription, or bud through the endoplasmic reticulum to provide new virions. The polypeptide is Capsid protein (Homo sapiens (Human)).